The primary structure comprises 329 residues: GTP 3',8-cyclase (329 aa).

The 227-residue stretch at 8–234 (AFARKFYYLR…QLRQRSDGPA (227 aa)) folds into the Radical SAM core domain. Residue Arg-17 coordinates GTP. [4Fe-4S] cluster is bound by residues Cys-24 and Cys-28. Tyr-30 provides a ligand contact to S-adenosyl-L-methionine. Cys-31 contributes to the [4Fe-4S] cluster binding site. Arg-68 is a binding site for GTP. S-adenosyl-L-methionine is bound at residue Gly-72. GTP is bound at residue Thr-99. Ser-123 contacts S-adenosyl-L-methionine. Lys-160 contributes to the GTP binding site. An S-adenosyl-L-methionine-binding site is contributed by Met-194. The [4Fe-4S] cluster site is built by Cys-257 and Cys-260. 262–264 (RLR) contacts GTP. Position 274 (Cys-274) interacts with [4Fe-4S] cluster.

Belongs to the radical SAM superfamily. MoaA family. In terms of assembly, monomer and homodimer. [4Fe-4S] cluster serves as cofactor.

It carries out the reaction GTP + AH2 + S-adenosyl-L-methionine = (8S)-3',8-cyclo-7,8-dihydroguanosine 5'-triphosphate + 5'-deoxyadenosine + L-methionine + A + H(+). Its pathway is cofactor biosynthesis; molybdopterin biosynthesis. In terms of biological role, catalyzes the cyclization of GTP to (8S)-3',8-cyclo-7,8-dihydroguanosine 5'-triphosphate. This is GTP 3',8-cyclase from Shigella boydii serotype 18 (strain CDC 3083-94 / BS512).